The sequence spans 366 residues: NADH-quinone oxidoreductase subunit D (366 aa).

The protein belongs to the complex I 49 kDa subunit family. As to quaternary structure, NDH-1 is composed of 14 different subunits. Subunits NuoB, C, D, E, F, and G constitute the peripheral sector of the complex.

It localises to the cell membrane. The enzyme catalyses a quinone + NADH + 5 H(+)(in) = a quinol + NAD(+) + 4 H(+)(out). In terms of biological role, NDH-1 shuttles electrons from NADH, via FMN and iron-sulfur (Fe-S) centers, to quinones in the respiratory chain. The immediate electron acceptor for the enzyme in this species is believed to be a menaquinone. Couples the redox reaction to proton translocation (for every two electrons transferred, four hydrogen ions are translocated across the cytoplasmic membrane), and thus conserves the redox energy in a proton gradient. The polypeptide is NADH-quinone oxidoreductase subunit D (Bacillus cereus (strain ATCC 10987 / NRS 248)).